A 625-amino-acid chain; its full sequence is Ankyrin repeat domain-containing protein oryK (625 aa).

9 ANK repeats span residues 1–27, 31–60, 62–89, 90–119, 162–195, 202–232, 500–530, 534–562, and 568–598; these read MDIYEAASQGRIDAIKFAVEQGCDVDG, DGKTPLWFAVQSGQPEACRFLMSLGAGRGP, NPSLLEVAVGGGYADIVALLWPHCNAER, EHRSLKTAISLGFHEIADFLIETGAFEYQD, FFDYALLLATKAGRNAGLRLVEFLLGESMPDVNC, QFETPLTAAAEKGNLEILATLIDHPNIDLTI, DTRCPLSWAAKSHNAPLVNALLRSPQVNVNF, SDRTPLLYAIAVNDRPIVERLLNHRDIDL, and EGRTAIFYAAQGGDLSIVQLLIGTQNVDFSI.

It participates in secondary metabolite biosynthesis. Its function is as follows. Ankyrin repeat domain-containing protein; part of the gene cluster that mediates the biosynthesis of oryzines, natural products with an unusual maleidride backbone. The two subunits of the fungal fatty acid synthase oryfasA and oryfasB probably form octenoic acid. This fatty acid is most likely activated by the acyl-CoA ligase oryP to give octenyl-CoA before the citrate synthase-like protein oryE catalyzes condensation with oxaloacetate to form tricarboxylic acid. The next steps of the pathways are conjectural, but a favorite possible route has been proposed, beginning with decarboxylation and concomitant dehydration by the decarboxylase oryM, followed by tautomerization, which may lead to the production of a diene intermediate. Reduction of this diene intermediate could give the known metabolite piliformic acid. On the pathway to oryzine B and oryzine A, however, hydroxylation of the diene by the alpha-ketoglutarate-dependent dioxygenase oryG and lactonisation by the lactonohydrolases oryH or oryL could give oryzine B directly. Finally, enoyl reduction by the dehydrogenase oryD would then convert oryzine B into oryzine A. In Aspergillus oryzae (strain ATCC 42149 / RIB 40) (Yellow koji mold), this protein is Ankyrin repeat domain-containing protein oryK.